Consider the following 56-residue polypeptide: Large ribosomal subunit protein bL32 (56 aa).

The segment covering 1–16 (MAVQKSKKSRSRRGMR) has biased composition (basic residues). Residues 1 to 38 (MAVQKSKKSRSRRGMRRSHDAVTPENLSVDPVSGETHR) form a disordered region.

Belongs to the bacterial ribosomal protein bL32 family.

The polypeptide is Large ribosomal subunit protein bL32 (Colwellia psychrerythraea (strain 34H / ATCC BAA-681) (Vibrio psychroerythus)).